The following is a 288-amino-acid chain: 33 kDa chaperonin (288 aa).

Disulfide bonds link Cys-236-Cys-238 and Cys-269-Cys-272.

Belongs to the HSP33 family. Under oxidizing conditions two disulfide bonds are formed involving the reactive cysteines. Under reducing conditions zinc is bound to the reactive cysteines and the protein is inactive.

Its subcellular location is the cytoplasm. Functionally, redox regulated molecular chaperone. Protects both thermally unfolding and oxidatively damaged proteins from irreversible aggregation. Plays an important role in the bacterial defense system toward oxidative stress. The chain is 33 kDa chaperonin from Lactococcus lactis subsp. cremoris (strain MG1363).